The primary structure comprises 498 residues: Ribulose bisphosphate carboxylase large chain (498 aa).

Positions 1 to 2 (MS) are excised as a propeptide. The residue at position 3 (Pro-3) is an N-acetylproline. Residue Lys-14 is modified to N6,N6,N6-trimethyllysine. Substrate contacts are provided by Asn-123 and Thr-173. Lys-175 acts as the Proton acceptor in catalysis. Substrate is bound at residue Lys-177. Positions 201, 203, and 204 each coordinate Mg(2+). Lys-201 is subject to N6-carboxylysine. His-294 (proton acceptor) is an active-site residue. Arg-295, His-327, and Ser-379 together coordinate substrate. The interval 471–498 (PVDTLDPNDKKQRDNEDTLADKLFGDKG) is disordered.

This sequence belongs to the RuBisCO large chain family. Type I subfamily. As to quaternary structure, heterohexadecamer of 8 large chains and 8 small chains; disulfide-linked. The disulfide link is formed within the large subunit homodimers. Mg(2+) serves as cofactor. The disulfide bond which can form in the large chain dimeric partners within the hexadecamer appears to be associated with oxidative stress and protein turnover.

It localises to the plastid. The catalysed reaction is 2 (2R)-3-phosphoglycerate + 2 H(+) = D-ribulose 1,5-bisphosphate + CO2 + H2O. It catalyses the reaction D-ribulose 1,5-bisphosphate + O2 = 2-phosphoglycolate + (2R)-3-phosphoglycerate + 2 H(+). Functionally, ruBisCO catalyzes two reactions: the carboxylation of D-ribulose 1,5-bisphosphate, the primary event in carbon dioxide fixation, as well as the oxidative fragmentation of the pentose substrate in the photorespiration process. Both reactions occur simultaneously and in competition at the same active site. The polypeptide is Ribulose bisphosphate carboxylase large chain (rbcL) (Cuscuta reflexa (Southern Asian dodder)).